A 275-amino-acid chain; its full sequence is Hydroxyethylthiazole kinase (275 aa).

Residue M50 participates in substrate binding. Residues R126 and S171 each coordinate ATP. Residue A200 coordinates substrate.

The protein belongs to the Thz kinase family. Mg(2+) is required as a cofactor.

It carries out the reaction 5-(2-hydroxyethyl)-4-methylthiazole + ATP = 4-methyl-5-(2-phosphooxyethyl)-thiazole + ADP + H(+). It participates in cofactor biosynthesis; thiamine diphosphate biosynthesis; 4-methyl-5-(2-phosphoethyl)-thiazole from 5-(2-hydroxyethyl)-4-methylthiazole: step 1/1. Functionally, catalyzes the phosphorylation of the hydroxyl group of 4-methyl-5-beta-hydroxyethylthiazole (THZ). The chain is Hydroxyethylthiazole kinase from Acinetobacter baumannii (strain ATCC 17978 / DSM 105126 / CIP 53.77 / LMG 1025 / NCDC KC755 / 5377).